Consider the following 201-residue polypeptide: Small ribosomal subunit protein uS4 (201 aa).

Residues phenylalanine 26 to lysine 45 form a disordered region. The S4 RNA-binding domain occupies serine 93–glutamine 153.

This sequence belongs to the universal ribosomal protein uS4 family. In terms of assembly, part of the 30S ribosomal subunit. Contacts protein S5. The interaction surface between S4 and S5 is involved in control of translational fidelity.

Its function is as follows. One of the primary rRNA binding proteins, it binds directly to 16S rRNA where it nucleates assembly of the body of the 30S subunit. Functionally, with S5 and S12 plays an important role in translational accuracy. The polypeptide is Small ribosomal subunit protein uS4 (Christiangramia forsetii (strain DSM 17595 / CGMCC 1.15422 / KT0803) (Gramella forsetii)).